A 459-amino-acid polypeptide reads, in one-letter code: Putrescine aminotransferase (459 aa).

Pyridoxal 5'-phosphate is bound by residues 150-151 (GT) and glutamine 274. At lysine 300 the chain carries N6-(pyridoxal phosphate)lysine. Residue threonine 332 participates in pyridoxal 5'-phosphate binding.

Belongs to the class-III pyridoxal-phosphate-dependent aminotransferase family. Putrescine aminotransferase subfamily. The cofactor is pyridoxal 5'-phosphate.

The catalysed reaction is an alkane-alpha,omega-diamine + 2-oxoglutarate = an omega-aminoaldehyde + L-glutamate. It catalyses the reaction putrescine + 2-oxoglutarate = 1-pyrroline + L-glutamate + H2O. It carries out the reaction cadaverine + 2-oxoglutarate = 5-aminopentanal + L-glutamate. Its pathway is amine and polyamine degradation; putrescine degradation; 4-aminobutanal from putrescine (transaminase route): step 1/1. Catalyzes the aminotransferase reaction from putrescine to 2-oxoglutarate, leading to glutamate and 4-aminobutanal, which spontaneously cyclizes to form 1-pyrroline. This is the first step in one of two pathways for putrescine degradation, where putrescine is converted into 4-aminobutanoate (gamma-aminobutyrate or GABA) via 4-aminobutanal. Also functions as a cadaverine transaminase in a a L-lysine degradation pathway to succinate that proceeds via cadaverine, glutarate and L-2-hydroxyglutarate. This is Putrescine aminotransferase from Salmonella paratyphi B (strain ATCC BAA-1250 / SPB7).